The primary structure comprises 282 residues: Pantothenate synthetase (282 aa).

Met-30 to His-37 contributes to the ATP binding site. The active-site Proton donor is the His-37. Gln-60 lines the (R)-pantoate pocket. Gln-60 lines the beta-alanine pocket. Gly-146 to Asp-149 provides a ligand contact to ATP. Position 152 (Gln-152) interacts with (R)-pantoate. Residues Ile-175 and Lys-183–Arg-186 contribute to the ATP site.

The protein belongs to the pantothenate synthetase family. Homodimer.

The protein resides in the cytoplasm. The enzyme catalyses (R)-pantoate + beta-alanine + ATP = (R)-pantothenate + AMP + diphosphate + H(+). The protein operates within cofactor biosynthesis; (R)-pantothenate biosynthesis; (R)-pantothenate from (R)-pantoate and beta-alanine: step 1/1. Functionally, catalyzes the condensation of pantoate with beta-alanine in an ATP-dependent reaction via a pantoyl-adenylate intermediate. The polypeptide is Pantothenate synthetase (Campylobacter jejuni subsp. jejuni serotype O:23/36 (strain 81-176)).